Here is a 523-residue protein sequence, read N- to C-terminus: Sialate O-acetylesterase (523 aa).

Positions 1-23 are cleaved as a signal peptide; sequence MVAPGLVLGLVLPLILWADRSAG. Asn107, Asn138, Asn267, Asn290, Asn401, and Asn422 each carry an N-linked (GlcNAc...) asparagine glycan.

As to expression, widely expressed with high expression in the testis, prostate, and colon.

Its subcellular location is the lysosome. It localises to the cytoplasm. The catalysed reaction is N-acetyl-9-O-acetylneuraminate + H2O = N-acetylneuraminate + acetate + H(+). It carries out the reaction an Ac-O-9-sialoglycoconjugate + H2O = a sialoglycoconjugate + acetate + H(+). Catalyzes the removal of O-acetyl ester groups from position 9 of the free diacetylated sialate N-acetyl-9-O-acetylneuraminate (Neu5,9Ac2) in the cytosol and of the diacetylated sialate residues of sialylglycoconjugates in the lysosomes. Together with the sialate-O-acetyltransferase they regulate the balance of acetylated sialoglycoconjugates, key players in various processes such as cell-cell interactions, host-pathogen recognition, and tumor antigenicity. This is Sialate O-acetylesterase (SIAE) from Homo sapiens (Human).